Consider the following 303-residue polypeptide: Oxygen-dependent coproporphyrinogen-III oxidase (303 aa).

Substrate is bound at residue S93. A divalent metal cation-binding residues include H97 and H107. H107 functions as the Proton donor in the catalytic mechanism. Position 109-111 (109-111 (NVR)) interacts with substrate. A divalent metal cation is bound by residues H146 and H176. An important for dimerization region spans residues 241–276 (YVEFNLVYDRGTLFGLQSGGRTESILMSLPPQVRWG). 259-261 (GGR) lines the substrate pocket.

This sequence belongs to the aerobic coproporphyrinogen-III oxidase family. Homodimer. A divalent metal cation is required as a cofactor.

Its subcellular location is the cytoplasm. It catalyses the reaction coproporphyrinogen III + O2 + 2 H(+) = protoporphyrinogen IX + 2 CO2 + 2 H2O. It participates in porphyrin-containing compound metabolism; protoporphyrin-IX biosynthesis; protoporphyrinogen-IX from coproporphyrinogen-III (O2 route): step 1/1. Its function is as follows. Involved in the heme biosynthesis. Catalyzes the aerobic oxidative decarboxylation of propionate groups of rings A and B of coproporphyrinogen-III to yield the vinyl groups in protoporphyrinogen-IX. The chain is Oxygen-dependent coproporphyrinogen-III oxidase from Pseudomonas putida (strain ATCC 47054 / DSM 6125 / CFBP 8728 / NCIMB 11950 / KT2440).